The sequence spans 650 residues: Solute carrier family 23 member 2 (650 aa).

A compositionally biased stretch (polar residues) spans 1–20 (MMGIGKNTTSKSMEAGSSTE). Residues 1–21 (MMGIGKNTTSKSMEAGSSTEG) are disordered. Residues 9–110 (TSKSMEAGSS…LCIFLGLQHY (102 aa)) are Cytoplasmic-facing. A Phosphoserine modification is found at Ser70. Thr75 is subject to Phosphothreonine. Ser78 bears the Phosphoserine mark. The residue at position 79 (Thr79) is a Phosphothreonine. Ser81 carries the phosphoserine modification. Residues 111–131 (LTCFSGTIAVPFLLADAMCVG) traverse the membrane as a helical segment. The Extracellular portion of the chain corresponds to 132–139 (YDQWATSQ). A helical transmembrane segment spans residues 140–160 (LIGTIFFCVGITTLLQTTFGC). Position 161 (Arg161) is a topological domain, cytoplasmic. The helical transmembrane segment at 162–182 (LPLFQASAFAFLAPARAILSL) threads the bilayer. Residues 183–218 (DKWKCNTTDVSVANGTAELLHTEHIWYPRIREIQGA) are Extracellular-facing. 2 N-linked (GlcNAc...) asparagine glycosylation sites follow: Asn188 and Asn196. Residues 219 to 239 (IIMSSLIEVVIGLLGLPGALL) form a helical membrane-spanning segment. The Cytoplasmic portion of the chain corresponds to 240-266 (KYIGPLTITPTVALIGLSGFQAAGERA). The helical transmembrane segment at 267–284 (GKHWGIAMLTIFLVLLFS) threads the bilayer. Residues 285–288 (QYAR) lie on the Extracellular side of the membrane. The segment at residues 289 to 302 (NVKFPLPIYKSKKG) is an intramembrane region (helical). The Extracellular segment spans residues 303–309 (WTAYKLQ). A helical membrane pass occupies residues 310-330 (LFKMFPIILAILVSWLLCFIF). The Cytoplasmic portion of the chain corresponds to 331 to 371 (TVTDVFPPDSTKYGFYARTDARQGVLLVAPWFKVPYPFQWG). Residues 372–392 (LPTVSAAGVIGMLSAVVASII) form a helical membrane-spanning segment. Topologically, residues 393–417 (ESIGDYYACARLSCAPPPPIHAINR) are extracellular. The helical transmembrane segment at 418-438 (GIFVEGLSCVLDGIFGTGNGS) threads the bilayer. The Cytoplasmic portion of the chain corresponds to 439-461 (TSSSPNIGVLGITKVGSRRVIQC). Residues 462 to 482 (GAALMLALGMIGKFSALFASL) traverse the membrane as a helical segment. The Extracellular portion of the chain corresponds to 483-485 (PDP). Residues 486 to 506 (VLGALFCTLFGMITAVGLSNL) traverse the membrane as a helical segment. Topologically, residues 507–516 (QFIDLNSSRN) are cytoplasmic. The chain crosses the membrane as a helical span at residues 517–537 (LFVLGFSIFFGLVLPSYLRQN). The Extracellular portion of the chain corresponds to 538 to 547 (PLVTGITGID). A helical membrane pass occupies residues 548–568 (QVLNVLLTTAMFVGGCVAFIL). The Cytoplasmic segment spans residues 569–650 (DNTIPGTPEE…SSDEDSQATG (82 aa)). At Thr649 the chain carries Phosphothreonine.

It belongs to the nucleobase:cation symporter-2 (NCS2) (TC 2.A.40) family. As to quaternary structure, interacts with CLSTN3. Post-translationally, phosphorylated. Ubiquitous.

Its subcellular location is the cell membrane. The catalysed reaction is L-ascorbate(out) + 2 Na(+)(out) = L-ascorbate(in) + 2 Na(+)(in). Its function is as follows. Sodium/ascorbate cotransporter. Mediates electrogenic uptake of vitamin C, with a stoichiometry of 2 Na(+) for each ascorbate. In Homo sapiens (Human), this protein is Solute carrier family 23 member 2 (SLC23A2).